Here is a 457-residue protein sequence, read N- to C-terminus: Reticulophagy regulator 3 (457 aa).

The segment at 1 to 24 (MAQRVGEEEQGASGLRRRRSGARC) is disordered. 3 helical membrane-spanning segments follow: residues 80–100 (FFALTSLRIIFLVAFGLMIII), 165–185 (PGKFCLLACSFLTFLAVLGGY), and 186–206 (IPGVVLSYLLLLFLLLWPLAI). Over residues 291 to 305 (ENGTFNLSRGQTPLT) the composition is skewed to polar residues. Disordered stretches follow at residues 291–351 (ENGT…IPST) and 410–457 (AYAE…HSHQ). Basic and acidic residues predominate over residues 310-326 (DLDRHSDPEESFARDLP). Over residues 428–441 (LDTDAEADDFELLD) the composition is skewed to acidic residues. The LIR motif motif lies at 435 to 440 (DDFELL). A compositionally biased stretch (polar residues) spans 443-457 (SELSQMDPSSSHSHQ).

It belongs to the RETREG family. As to quaternary structure, interacts with ATG8 family modifier proteins.

The protein localises to the endoplasmic reticulum membrane. Functionally, endoplasmic reticulum (ER)-anchored autophagy regulator which exists in an inactive state under basal conditions but is activated following cellular stress. When activated, induces ER fragmentation and mediates ER delivery into lysosomes through sequestration into autophagosomes via interaction with ATG8 family proteins. Promotes ER membrane curvature and ER tubulation required for subsequent ER fragmentation and engulfment into autophagosomes. The sequence is that of Reticulophagy regulator 3 (retreg3) from Xenopus tropicalis (Western clawed frog).